Consider the following 131-residue polypeptide: VAICSPLLYSTVMTKRVCMQLVVGSYMGGLLNSLTHTCGLLGLPFCGPNVINHYFCDIPPLLQLACSDTHRNETLLLAFSAVIALFTLFVITASYMLILSVILKIQSDDGRKKTFHTCASHLTAITIFFGS.

Residues 1–16 (VAICSPLLYSTVMTKR) are Cytoplasmic-facing. Residues 17-41 (VCMQLVVGSYMGGLLNSLTHTCGLL) traverse the membrane as a helical segment. Topologically, residues 42-82 (GLPFCGPNVINHYFCDIPPLLQLACSDTHRNETLLLAFSAV) are extracellular. An N-linked (GlcNAc...) asparagine glycan is attached at Asn72. Residues 83–103 (IALFTLFVITASYMLILSVIL) traverse the membrane as a helical segment. Residues 104–116 (KIQSDDGRKKTFH) lie on the Cytoplasmic side of the membrane. A helical transmembrane segment spans residues 117 to 131 (TCASHLTAITIFFGS).

It belongs to the G-protein coupled receptor 1 family.

It localises to the cell membrane. In terms of biological role, odorant receptor. The chain is Olfactory receptor-like protein COR9 (COR9) from Gallus gallus (Chicken).